The primary structure comprises 345 residues: Phosphoribosylformylglycinamidine cyclo-ligase (345 aa).

Belongs to the AIR synthase family.

It localises to the cytoplasm. The catalysed reaction is 2-formamido-N(1)-(5-O-phospho-beta-D-ribosyl)acetamidine + ATP = 5-amino-1-(5-phospho-beta-D-ribosyl)imidazole + ADP + phosphate + H(+). Its pathway is purine metabolism; IMP biosynthesis via de novo pathway; 5-amino-1-(5-phospho-D-ribosyl)imidazole from N(2)-formyl-N(1)-(5-phospho-D-ribosyl)glycinamide: step 2/2. The polypeptide is Phosphoribosylformylglycinamidine cyclo-ligase (Shewanella frigidimarina (strain NCIMB 400)).